Here is a 518-residue protein sequence, read N- to C-terminus: Chromosomal replication initiator protein DnaA (518 aa).

The tract at residues 1 to 72 (MTLAEFWPLC…VREELAAGRS (72 aa)) is domain I, interacts with DnaA modulators. The domain II stretch occupies residues 72–180 (SAFVFKPGEG…DAEEARYEQT (109 aa)). The segment at 181–397 (NLSPDYTFDT…GAFNRVGASS (217 aa)) is domain III, AAA+ region. Residues glycine 225, glycine 227, lysine 228, and threonine 229 each coordinate ATP. Positions 398–518 (RFMNRPVIDI…YEKLLILIQN (121 aa)) are domain IV, binds dsDNA.

Belongs to the DnaA family. As to quaternary structure, oligomerizes as a right-handed, spiral filament on DNA at oriC.

Its subcellular location is the cytoplasm. In terms of biological role, plays an essential role in the initiation and regulation of chromosomal replication. ATP-DnaA binds to the origin of replication (oriC) to initiate formation of the DNA replication initiation complex once per cell cycle. Binds the DnaA box (a 9 base pair repeat at the origin) and separates the double-stranded (ds)DNA. Forms a right-handed helical filament on oriC DNA; dsDNA binds to the exterior of the filament while single-stranded (ss)DNA is stabiized in the filament's interior. The ATP-DnaA-oriC complex binds and stabilizes one strand of the AT-rich DNA unwinding element (DUE), permitting loading of DNA polymerase. After initiation quickly degrades to an ADP-DnaA complex that is not apt for DNA replication. Binds acidic phospholipids. The sequence is that of Chromosomal replication initiator protein DnaA from Neisseria meningitidis serogroup C / serotype 2a (strain ATCC 700532 / DSM 15464 / FAM18).